The chain runs to 351 residues: Autoinducer 2 import system permease protein LsrC (351 aa).

The next 9 helical transmembrane spans lie at 14-34 (LLAI…YFSL), 39-59 (MIFS…LVML), 70-90 (ITGL…GLAA), 93-113 (LFAL…VTWL), 115-135 (IPAI…MLLL), 155-175 (ILFS…AMAW), 213-233 (MNGV…GFIP), 252-272 (GISL…AFLL), and 284-304 (LPAW…LVFD).

Belongs to the binding-protein-dependent transport system permease family. AraH/RbsC subfamily. As to quaternary structure, the complex is composed of two ATP-binding proteins (LsrA), two transmembrane proteins (LsrC and LsrD) and a solute-binding protein (LsrB).

Its subcellular location is the cell inner membrane. Functionally, part of the ABC transporter complex LsrABCD involved in autoinducer 2 (AI-2) import. Probably responsible for the translocation of the substrate across the membrane. This chain is Autoinducer 2 import system permease protein LsrC (lsrC), found in Yersinia pseudotuberculosis serotype O:1b (strain IP 31758).